The sequence spans 190 residues: MADSIIQSPDLGDVTGYLRERIRTVPDWPQPGVMFRDITPLLQDPKTLRVLIDVFVHRYMDAQLDLVAGIDARGFILGAIVAYELNLGFVPIRKKGKLPFQTVAEEYELEYGSATVEIHADACKTGDRVLLVDDLIATGGTMMAGRKLLERLGATVVEGAAIVDLPELGGSKLLHGAGLPLFTVCKFEGH.

Belongs to the purine/pyrimidine phosphoribosyltransferase family. As to quaternary structure, homodimer.

The protein localises to the cytoplasm. The catalysed reaction is AMP + diphosphate = 5-phospho-alpha-D-ribose 1-diphosphate + adenine. Its pathway is purine metabolism; AMP biosynthesis via salvage pathway; AMP from adenine: step 1/1. Functionally, catalyzes a salvage reaction resulting in the formation of AMP, that is energically less costly than de novo synthesis. This Cupriavidus taiwanensis (strain DSM 17343 / BCRC 17206 / CCUG 44338 / CIP 107171 / LMG 19424 / R1) (Ralstonia taiwanensis (strain LMG 19424)) protein is Adenine phosphoribosyltransferase.